We begin with the raw amino-acid sequence, 328 residues long: Ketol-acid reductoisomerase (NADP(+)) (328 aa).

Residues 1–181 (MKIYYENDID…GLARAGVLET (181 aa)) form the KARI N-terminal Rossmann domain. NADP(+) contacts are provided by residues 24–27 (YGSQ), Arg47, Ser52, and 82–85 (DEIQ). Residue His107 is part of the active site. Position 133 (Gly133) interacts with NADP(+). The KARI C-terminal knotted domain occupies 182 to 327 (TFREETETDL…SKLRKLCGLE (146 aa)). Mg(2+)-binding residues include Asp190, Glu194, Glu226, and Glu230. Substrate is bound at residue Ser251.

It belongs to the ketol-acid reductoisomerase family. Mg(2+) serves as cofactor.

The catalysed reaction is (2R)-2,3-dihydroxy-3-methylbutanoate + NADP(+) = (2S)-2-acetolactate + NADPH + H(+). The enzyme catalyses (2R,3R)-2,3-dihydroxy-3-methylpentanoate + NADP(+) = (S)-2-ethyl-2-hydroxy-3-oxobutanoate + NADPH + H(+). The protein operates within amino-acid biosynthesis; L-isoleucine biosynthesis; L-isoleucine from 2-oxobutanoate: step 2/4. Its pathway is amino-acid biosynthesis; L-valine biosynthesis; L-valine from pyruvate: step 2/4. Functionally, involved in the biosynthesis of branched-chain amino acids (BCAA). Catalyzes an alkyl-migration followed by a ketol-acid reduction of (S)-2-acetolactate (S2AL) to yield (R)-2,3-dihydroxy-isovalerate. In the isomerase reaction, S2AL is rearranged via a Mg-dependent methyl migration to produce 3-hydroxy-3-methyl-2-ketobutyrate (HMKB). In the reductase reaction, this 2-ketoacid undergoes a metal-dependent reduction by NADPH to yield (R)-2,3-dihydroxy-isovalerate. This Methanothermobacter thermautotrophicus (strain ATCC 29096 / DSM 1053 / JCM 10044 / NBRC 100330 / Delta H) (Methanobacterium thermoautotrophicum) protein is Ketol-acid reductoisomerase (NADP(+)).